The chain runs to 422 residues: Serine--tRNA ligase (422 aa).

L-serine is bound at residue 229–231 (TAE). 260–262 (RKE) serves as a coordination point for ATP. Glu283 is a binding site for L-serine. 347 to 350 (EISS) is a binding site for ATP. Ser383 serves as a coordination point for L-serine.

It belongs to the class-II aminoacyl-tRNA synthetase family. Type-1 seryl-tRNA synthetase subfamily. Homodimer. The tRNA molecule binds across the dimer.

It is found in the cytoplasm. It carries out the reaction tRNA(Ser) + L-serine + ATP = L-seryl-tRNA(Ser) + AMP + diphosphate + H(+). It catalyses the reaction tRNA(Sec) + L-serine + ATP = L-seryl-tRNA(Sec) + AMP + diphosphate + H(+). It functions in the pathway aminoacyl-tRNA biosynthesis; selenocysteinyl-tRNA(Sec) biosynthesis; L-seryl-tRNA(Sec) from L-serine and tRNA(Sec): step 1/1. In terms of biological role, catalyzes the attachment of serine to tRNA(Ser). Is also able to aminoacylate tRNA(Sec) with serine, to form the misacylated tRNA L-seryl-tRNA(Sec), which will be further converted into selenocysteinyl-tRNA(Sec). This Geobacter sp. (strain M21) protein is Serine--tRNA ligase.